Reading from the N-terminus, the 431-residue chain is Phosphoribosylamine--glycine ligase (431 aa).

Positions 109 to 316 (KDFLARHGIP…LVDLLEAAID (208 aa)) constitute an ATP-grasp domain. 135–196 (VREKGTPIVV…EEFLDGEEAS (62 aa)) contacts ATP. Positions 286 and 288 each coordinate Mg(2+).

The protein belongs to the GARS family. It depends on Mg(2+) as a cofactor. Mn(2+) serves as cofactor.

The catalysed reaction is 5-phospho-beta-D-ribosylamine + glycine + ATP = N(1)-(5-phospho-beta-D-ribosyl)glycinamide + ADP + phosphate + H(+). It participates in purine metabolism; IMP biosynthesis via de novo pathway; N(1)-(5-phospho-D-ribosyl)glycinamide from 5-phospho-alpha-D-ribose 1-diphosphate: step 2/2. The sequence is that of Phosphoribosylamine--glycine ligase from Xanthomonas axonopodis pv. citri (strain 306).